A 65-amino-acid chain; its full sequence is Large ribosomal subunit protein bL35 (65 aa).

A disordered region spans residues 23 to 44; sequence KRMKAGKQHILTKKSQKTKRNL.

It belongs to the bacterial ribosomal protein bL35 family.

This Lachnoclostridium phytofermentans (strain ATCC 700394 / DSM 18823 / ISDg) (Clostridium phytofermentans) protein is Large ribosomal subunit protein bL35.